The chain runs to 183 residues: Endoribonuclease YbeY (183 aa).

The Zn(2+) site is built by His143, His147, and His153.

Belongs to the endoribonuclease YbeY family. It depends on Zn(2+) as a cofactor.

The protein localises to the cytoplasm. Its function is as follows. Single strand-specific metallo-endoribonuclease involved in late-stage 70S ribosome quality control and in maturation of the 3' terminus of the 16S rRNA. In Rickettsia bellii (strain RML369-C), this protein is Endoribonuclease YbeY.